The chain runs to 403 residues: Na(+)/H(+) antiporter NhaA (403 aa).

The next 12 membrane-spanning stretches (helical) occupy residues 25–45 (IAGLVLLVSMLVAFFWVNSPF), 70–90 (LILWINEGLMIVFFFLIGLEI), 105–125 (IALPAFAALGGMLVPAAIFLA), 136–156 (GWAVPAATDIVLALALLAMLG), 165–185 (VFLTALAIFDDFGTLVIIALA), 188–208 (EGLSLPSLLMAALGTLALIVL), 213–233 (VASLTAYVLVGVFVWVSVLES), 234–254 (GVHSTLAGVIIAWCIPMRVSG), 269–289 (VALLIVPLFAFFNAGIDLGGV), 302–322 (IILGLFVGKQVGVMLGVGLAV), 340–360 (GAALLSGVGFTMSLFVAGLAF), and 369–389 (VNLAVVVGSVLSATGGLVVLA).

Belongs to the NhaA Na(+)/H(+) (TC 2.A.33) antiporter family.

Its subcellular location is the cell inner membrane. It catalyses the reaction Na(+)(in) + 2 H(+)(out) = Na(+)(out) + 2 H(+)(in). Na(+)/H(+) antiporter that extrudes sodium in exchange for external protons. In Maricaulis maris (strain MCS10) (Caulobacter maris), this protein is Na(+)/H(+) antiporter NhaA.